Consider the following 620-residue polypeptide: Chaperone protein HscA homolog (620 aa).

The protein belongs to the heat shock protein 70 family.

Chaperone involved in the maturation of iron-sulfur cluster-containing proteins. Has a low intrinsic ATPase activity which is markedly stimulated by HscB. In Shewanella sp. (strain MR-7), this protein is Chaperone protein HscA homolog.